The following is a 232-amino-acid chain: Orotidine 5'-phosphate decarboxylase (232 aa).

Residues Asp11, Lys32, 59-68 (DLKFHDIPNT), Thr118, Arg180, Gln189, Gly209, and Arg210 contribute to the substrate site. Lys61 serves as the catalytic Proton donor.

The protein belongs to the OMP decarboxylase family. Type 1 subfamily. As to quaternary structure, homodimer.

It catalyses the reaction orotidine 5'-phosphate + H(+) = UMP + CO2. It participates in pyrimidine metabolism; UMP biosynthesis via de novo pathway; UMP from orotate: step 2/2. Catalyzes the decarboxylation of orotidine 5'-monophosphate (OMP) to uridine 5'-monophosphate (UMP). In Gloeothece citriformis (strain PCC 7424) (Cyanothece sp. (strain PCC 7424)), this protein is Orotidine 5'-phosphate decarboxylase.